Consider the following 224-residue polypeptide: Peptide deformylase 3 (224 aa).

The Fe cation site is built by C135 and H177. Residue E178 is part of the active site. A Fe cation-binding site is contributed by H181.

The protein belongs to the polypeptide deformylase family. The cofactor is Fe(2+).

The catalysed reaction is N-terminal N-formyl-L-methionyl-[peptide] + H2O = N-terminal L-methionyl-[peptide] + formate. In terms of biological role, removes the formyl group from the N-terminal Met of newly synthesized proteins. Requires at least a dipeptide for an efficient rate of reaction. N-terminal L-methionine is a prerequisite for activity but the enzyme has broad specificity at other positions. The polypeptide is Peptide deformylase 3 (Streptomyces avermitilis (strain ATCC 31267 / DSM 46492 / JCM 5070 / NBRC 14893 / NCIMB 12804 / NRRL 8165 / MA-4680)).